The sequence spans 519 residues: Putative cytochrome P450 CYP13A10 (519 aa).

The chain crosses the membrane as a helical span at residues valine 3–tryptophan 23. Residue cysteine 465 participates in heme binding.

The protein belongs to the cytochrome P450 family. The cofactor is heme.

The protein resides in the membrane. In terms of biological role, cytochromes P450 are a group of heme-thiolate monooxygenases. They oxidize a variety of structurally unrelated compounds, including steroids, fatty acids, and xenobiotics. In Caenorhabditis elegans, this protein is Putative cytochrome P450 CYP13A10 (cyp-13A10).